Reading from the N-terminus, the 189-residue chain is Interferon alpha-8 (189 aa).

A signal peptide spans Met1–Gly23. Disulfide bonds link Cys24-Cys122 and Cys52-Cys162.

The protein belongs to the alpha/beta interferon family.

It is found in the secreted. Produced by macrophages, IFN-alpha have antiviral activities. Interferon stimulates the production of two enzymes: a protein kinase and an oligoadenylate synthetase. The polypeptide is Interferon alpha-8 (IFNA8) (Homo sapiens (Human)).